Consider the following 187-residue polypeptide: uncharacterized protein (187 aa).

The first 17 residues, 1–17, serve as a signal peptide directing secretion; it reads MYAGGRVVRSAFARGKV. Cysteine 18 carries N-palmitoyl cysteine lipidation. The S-diacylglycerol cysteine moiety is linked to residue cysteine 18.

Its subcellular location is the cell membrane. This is an uncharacterized protein from Treponema pallidum (strain Nichols).